The following is a 355-amino-acid chain: Putative transport protein PH1000 (355 aa).

8 helical membrane passes run 34–54, 55–75, 84–104, 158–178, 212–232, 240–260, 274–294, and 310–330; these read VTWI…LPFF, SPLF…IKLK, AILL…ILVY, FSVP…YFFL, VWLL…LIFK, ILAG…GWMI, IIAG…LPDF, and VLVL…GLII.

The protein belongs to the autoinducer-2 exporter (AI-2E) (TC 2.A.86) family.

The protein resides in the cell membrane. This is Putative transport protein PH1000 from Pyrococcus horikoshii (strain ATCC 700860 / DSM 12428 / JCM 9974 / NBRC 100139 / OT-3).